Consider the following 321-residue polypeptide: Proline-rich protein 2 (321 aa).

The signal sequence occupies residues 1-26; the sequence is MRILPKSGGGALCLLFVFALCSVAHS. 24 tandem repeats follow at residues 168–172, 173–176, 177–181, 185–189, 190–194, 198–202, 207–211, 212–217, 218–223, 225–229, 234–238, 240–244, 245–251, 252–256, 262–266, 267–271, 272–276, 277–281, 282–286, 288–292, 293–297, 298–302, 303–307, and 315–319. Positions 168 to 319 are 24 X 5 AA approximate repeats; sequence PPLNLPPLTF…KFGKWPPFPS (152 aa).

It belongs to the plant proline-rich protein superfamily. Mostly expressed in aerial organs, particularly in expanding leaves, stems, flowers, and siliques.

The protein resides in the secreted. It is found in the cell wall. This is Proline-rich protein 2 (PRP2) from Arabidopsis thaliana (Mouse-ear cress).